The chain runs to 479 residues: UDP-glycosyltransferase 85A8 (479 aa).

UDP-alpha-D-glucose-binding positions include Ser-302, 358–359 (WC), 376–384 (HSGWNSTIE), and 398–401 (FAEQ).

This sequence belongs to the UDP-glycosyltransferase family.

In terms of biological role, may glycosylate diterpenes or flavonols in leaves. This chain is UDP-glycosyltransferase 85A8, found in Stevia rebaudiana (Stevia).